Consider the following 290-residue polypeptide: Ribosomal RNA small subunit methyltransferase A (290 aa).

S-adenosyl-L-methionine-binding residues include Asn27, Leu29, Gly54, Glu75, Asp100, and Asn125.

Belongs to the class I-like SAM-binding methyltransferase superfamily. rRNA adenine N(6)-methyltransferase family. RsmA subfamily.

The protein localises to the cytoplasm. The catalysed reaction is adenosine(1518)/adenosine(1519) in 16S rRNA + 4 S-adenosyl-L-methionine = N(6)-dimethyladenosine(1518)/N(6)-dimethyladenosine(1519) in 16S rRNA + 4 S-adenosyl-L-homocysteine + 4 H(+). In terms of biological role, specifically dimethylates two adjacent adenosines (A1518 and A1519) in the loop of a conserved hairpin near the 3'-end of 16S rRNA in the 30S particle. May play a critical role in biogenesis of 30S subunits. This Streptococcus agalactiae serotype V (strain ATCC BAA-611 / 2603 V/R) protein is Ribosomal RNA small subunit methyltransferase A.